The primary structure comprises 180 residues: Translation initiation factor IF-3 (180 aa).

The protein belongs to the IF-3 family. In terms of assembly, monomer.

It localises to the cytoplasm. IF-3 binds to the 30S ribosomal subunit and shifts the equilibrium between 70S ribosomes and their 50S and 30S subunits in favor of the free subunits, thus enhancing the availability of 30S subunits on which protein synthesis initiation begins. This chain is Translation initiation factor IF-3, found in Salmonella paratyphi A (strain ATCC 9150 / SARB42).